Reading from the N-terminus, the 262-residue chain is MLEQMYEALQRLRKEKPVILNITNYVSMDFLANCFLAIGASPIMSVSDLELEELIGLSSAVYLNIGTLDHLFIQRSYRAVDIAIRQNKPIIFDPVGSGTTKIRTEVSHHLLAHSTIVRGNASKILSFGDLSIKTRGVDSANTTHDAKETAIALANECLCGCAIAVTGAVDFITDGKRSATIELGDPLMSHVTGMGCSLTGVLAAFRSVIDDSFEAARLGVEYFSLCGMLARERCEGPGLFKAYFLDELYAADFDRMRRYYEQ.

Met44 lines the substrate pocket. Residues Arg118 and Thr166 each coordinate ATP. Gly193 contacts substrate.

This sequence belongs to the Thz kinase family. Mg(2+) serves as cofactor.

The enzyme catalyses 5-(2-hydroxyethyl)-4-methylthiazole + ATP = 4-methyl-5-(2-phosphooxyethyl)-thiazole + ADP + H(+). It functions in the pathway cofactor biosynthesis; thiamine diphosphate biosynthesis; 4-methyl-5-(2-phosphoethyl)-thiazole from 5-(2-hydroxyethyl)-4-methylthiazole: step 1/1. Its function is as follows. Catalyzes the phosphorylation of the hydroxyl group of 4-methyl-5-beta-hydroxyethylthiazole (THZ). The sequence is that of Hydroxyethylthiazole kinase from Chlamydia caviae (strain ATCC VR-813 / DSM 19441 / 03DC25 / GPIC) (Chlamydophila caviae).